The primary structure comprises 133 residues: Ribosome-binding factor A (133 aa).

The protein belongs to the RbfA family. As to quaternary structure, monomer. Binds 30S ribosomal subunits, but not 50S ribosomal subunits or 70S ribosomes.

The protein localises to the cytoplasm. One of several proteins that assist in the late maturation steps of the functional core of the 30S ribosomal subunit. Associates with free 30S ribosomal subunits (but not with 30S subunits that are part of 70S ribosomes or polysomes). Required for efficient processing of 16S rRNA. May interact with the 5'-terminal helix region of 16S rRNA. The polypeptide is Ribosome-binding factor A (Bordetella pertussis (strain Tohama I / ATCC BAA-589 / NCTC 13251)).